A 262-amino-acid polypeptide reads, in one-letter code: Catechol O-methyltransferase domain-containing protein 1 (262 aa).

Residues 12–32 (AALALGSAALGAAFATGLFLG) traverse the membrane as a helical; Signal-anchor for type II membrane protein segment. S-adenosyl-L-methionine-binding positions include aspartate 108, 110-111 (GT), serine 116, glutamate 134, valine 135, alanine 163, aspartate 185, aspartate 187, and tyrosine 194.

Belongs to the class I-like SAM-binding methyltransferase superfamily. Cation-dependent O-methyltransferase family. Homodimer.

The protein resides in the membrane. Its function is as follows. Putative O-methyltransferase. The polypeptide is Catechol O-methyltransferase domain-containing protein 1 (COMTD1) (Homo sapiens (Human)).